The following is a 500-amino-acid chain: Phosphatidylserine decarboxylase proenzyme 1, mitochondrial (500 aa).

A mitochondrion; not cleaved when targeted to the endoplasmic reticulum-targeting transit peptide spans 1–48 (MSIMPVKNALAQGRTLLMGRMPAVKFSTRMQLRNRTAVLWNRKFSTRL). An N-linked (GlcNAc...) asparagine glycan is attached at Asn-34. Topologically, residues 45–79 (STRLFVQQRRSSGEIVDRAKAAAANSGRKQVSMKW) are mitochondrial matrix. The tract at residues 57–101 (GEIVDRAKAAAANSGRKQVSMKWVVLTSFTIVLGTILLVSRNDST) is enables targeting to the endoplasmic reticulum in addition to mitochondria. The chain crosses the membrane as a helical span at residues 80 to 98 (VVLTSFTIVLGTILLVSRN). Residues 99–500 (DSTEEDATEG…LGIIGKNDLK (402 aa)) lie on the Mitochondrial intermembrane side of the membrane. Residues Asp-210, His-348, and Ser-463 each act as charge relay system; for autoendoproteolytic cleavage activity in the active site. Ser-463 functions as the Schiff-base intermediate with substrate; via pyruvic acid; for decarboxylase activity in the catalytic mechanism. Position 463 is a pyruvic acid (Ser); by autocatalysis (Ser-463). The interval 475 to 492 (FKFDVRVGDKVKMGQKLG) is required for processing and stability.

The protein belongs to the phosphatidylserine decarboxylase family. PSD-B subfamily. Eukaryotic type I sub-subfamily. Heterodimer of a large membrane-associated beta subunit and a small pyruvoyl-containing alpha subunit. Pyruvate is required as a cofactor. Post-translationally, glycosylated at Asn-34 in the endoplasmic reticulum. The precursor is imported via the TOM complex into mitochondria, where the N-terminal presequence is cleaved by the matrix-located proteases MPP (MAS1-MAS2) and OCT1. In terms of processing, is synthesized initially as an inactive proenzyme. Formation of the active enzyme involves a self-maturation process in which the active site pyruvoyl group is generated from an internal serine residue via an autocatalytic post-translational modification. Two non-identical subunits are generated from the proenzyme in this reaction, and the pyruvate is formed at the N-terminus of the alpha chain, which is derived from the carboxyl end of the proenzyme. The autoendoproteolytic cleavage occurs by a canonical serine protease mechanism, in which the side chain hydroxyl group of the serine supplies its oxygen atom to form the C-terminus of the beta chain, while the remainder of the serine residue undergoes an oxidative deamination to produce ammonia and the pyruvoyl prosthetic group on the alpha chain. During this reaction, the Ser that is part of the protease active site of the proenzyme becomes the pyruvoyl prosthetic group, which constitutes an essential element of the active site of the mature decarboxylase.

It localises to the mitochondrion inner membrane. Its subcellular location is the lipid droplet. The protein localises to the endoplasmic reticulum membrane. It carries out the reaction a 1,2-diacyl-sn-glycero-3-phospho-L-serine + H(+) = a 1,2-diacyl-sn-glycero-3-phosphoethanolamine + CO2. It functions in the pathway phospholipid metabolism; phosphatidylethanolamine biosynthesis; phosphatidylethanolamine from CDP-diacylglycerol: step 2/2. Functionally, catalyzes the formation of phosphatidylethanolamine (PtdEtn) from phosphatidylserine (PtdSer). Plays a central role in phospholipid metabolism and in the interorganelle trafficking of phosphatidylserine. Phosphatidylethanolamine formed in the mitochondria is exported to other membranes to fullfill their requirements for PtdEtn. Required for normal mitochondrial morphology and proper mitochondrial fusion during yeast mating. Involved in lipid droplet biogenesis at the endoplasmic reticulum membrane. Required for induction of mitophagy during nitrogen starvation. Appears to play a specific role in supporting respiratory complex III activity. The protein is Phosphatidylserine decarboxylase proenzyme 1, mitochondrial of Saccharomyces cerevisiae (strain ATCC 204508 / S288c) (Baker's yeast).